Here is a 531-residue protein sequence, read N- to C-terminus: Keratin, type II cytoskeletal 79 (531 aa).

The span at 1-12 (MRSSLSRQTFST) shows a compositional bias: polar residues. Residues 1 to 55 (MRSSLSRQTFSTKGGFSSNSASGGGGSRMRTSYSSVTMSRGSGGGGGVRSGSSSG) form a disordered region. The segment at 1 to 138 (MRSSLSRQTF…DPEIQRVRTQ (138 aa)) is head. Low complexity predominate over residues 28-40 (RMRTSYSSVTMSR). The span at 41 to 55 (GSGGGGGVRSGSSSG) shows a compositional bias: gly residues. The segment at 139-174 (EREQIKTLNNKFASFIDKVRFLEQQNKVLETKWALL) is coil 1A. The 315-residue stretch at 139-453 (EREQIKTLNN…KLLESEESRM (315 aa)) folds into the IF rod domain. Residues 175–194 (QEQSQNTGVARSLEPFFENY) are linker 1. The segment at 195-286 (LSTLRRQLDT…QLFEMELSQV (92 aa)) is coil 1B. The tract at residues 287 to 310 (QTNVSDTNVILSMDNNRNLDLDSI) is linker 12. The segment at 311–449 (IAEVKAQYEL…ATYRKLLESE (139 aa)) is coil 2. The tract at residues 450–531 (ESRMSGDCPS…TTVKTSSRRY (82 aa)) is tail.

Belongs to the intermediate filament family. Heterotetramer of two type I and two type II keratins.

This chain is Keratin, type II cytoskeletal 79 (Krt79), found in Mus musculus (Mouse).